A 236-amino-acid chain; its full sequence is MGPGFQDAYHAFHTAQDERQLFRQIASVVRQLGFDYCCYGIRVPLPVSKPAVAIFDTYPAGWMEHYQASGFLEIDPTVRTGASSSDLIIWPVSIRDEAARLWSDARDFGLNIGVARSSWTAHGAFGLLTLARRADPLTAAELEQLSATTNWLANLAHALMSPFLMPKLVPESSAALTAREREVLCWTGEGKTAYEIGQILRISERTVNFHVNNVLLKLAATNKVQAVVKAIAIGLI.

Positions 169 to 234 (VPESSAALTA…QAVVKAIAIG (66 aa)) constitute an HTH luxR-type domain. The H-T-H motif DNA-binding region spans 193-212 (AYEIGQILRISERTVNFHVN).

It belongs to the autoinducer-regulated transcriptional regulatory protein family.

In Ralstonia nicotianae (strain ATCC BAA-1114 / GMI1000) (Ralstonia solanacearum), this protein is Transcriptional activator protein SolR (solR).